We begin with the raw amino-acid sequence, 523 residues long: Probable endopeptidase p60 (523 aa).

Residues 1–27 (MNMKKATIAATAGIAVTAFAAPTIASA) form the signal peptide. One can recognise a LysM 1 domain in the interval 28-71 (STVVVEAGDTLWGIAQDNGTTVDALKKANKLTTDKIVPGQKLQV). One can recognise an SH3b domain in the interval 78 to 142 (KTEKSVSATW…VNGKYLGNAV (65 aa)). The disordered stretch occupies residues 146–188 (PSATPEVKQEETTQAAPAQQTKTEVKQATPAATTEKDAVETKT). The segment covering 157–167 (TTQAAPAQQTK) has biased composition (low complexity). Positions 198–241 (TTHTVKSGDTIWALSVKYGASVQDLMSWNNLSSSSIYVGQNIAV) constitute a LysM 2 domain. Low complexity-rich tracts occupy residues 251 to 282 (PKAE…TTTT) and 290 to 318 (EKQT…TNAS). 2 disordered regions span residues 251–323 (PKAE…YTVK) and 367–408 (ATNT…SSSA). A LysM 3 domain is found at 318-361 (SSYTVKSGDTLGKIASTFGTTVSKIKALNGLTSDNLQVGDVLKV). In terms of domain architecture, NlpC/P60 spans 405–523 (SSSASAIIAE…GQYLVGFGRV (119 aa)). The active-site Nucleophile is the Cys435. His485 serves as the catalytic Proton acceptor. The active site involves Asn497.

The protein belongs to the peptidase C40 family.

In terms of biological role, this major extracellular protein may be involved in the invasion of non-professional phagocytic cells by Listeria. The protein is Probable endopeptidase p60 (iap) of Listeria seeligeri.